The chain runs to 544 residues: Matrilin-1 (544 aa).

The first 26 residues, 1–26 (MRALSGPRLMLCGLLLLLFQAPCALG), serve as a signal peptide directing secretion. In terms of domain architecture, VWFA 1 spans 42–217 (DLVFVVDSSR…SVIEKLSKKF (176 aa)). N-linked (GlcNAc...) asparagine glycosylation is present at Asn-77. In terms of domain architecture, EGF-like spans 224–264 (VSDLCATGDHDCEQVCVSSPGSYTCACREGFTLNSDGKTCN). Cystine bridges form between Cys-228/Cys-239, Cys-235/Cys-248, and Cys-250/Cys-263. A VWFA 2 domain is found at 276–448 (DLVFLIDGSK…KTINQIGKKL (173 aa)). Residue Asn-345 is glycosylated (N-linked (GlcNAc...) asparagine).

Homotrimer. Part of a complex composed of MATN1 (via VWFA1 domain), type 2 collagens and type 6 collagens. Forms a complex (via covalent bonds) with ACAN; the interaction increases in abundance with increasing age of the organism via an increase in occupancy of MATN1 binding sites. Interacts with COMP. N-glycosylated; reduces binding affinity for type 2 collagens. Expressed in trachea from fetus into adulthood (at protein level).

It localises to the secreted. Its subcellular location is the extracellular space. The protein localises to the extracellular matrix. Its function is as follows. A major component of the extracellular matrix of non-articular cartilage. Binds to type 2 collagens and forms long concatenated protein networks as part of the extracellular matrix. Required for the network-like organization and bundling of collagen fibrils surrounding chondrocytes in the zones of maturation and hypertrophy. Required for mechanotransduction and adaption to mechanical loading in cartilage chondrocytes, resulting in an increase in expression of the extracellular matrix components ACAN and COL2A1. Acts as a moderator of angiogenesis in response to injury. The sequence is that of Matrilin-1 from Bos taurus (Bovine).